The chain runs to 371 residues: Protein maelstrom 1 (371 aa).

Positions A2 to R68 form a DNA-binding region, HMG box.

This sequence belongs to the maelstrom family.

The protein localises to the cytoplasm. It localises to the nucleus. Functionally, involved both in the piRNA and miRNA metabolic processes. As a component of the meiotic nuage, plays a central role during oogenesis by repressing transposable elements and preventing their mobilization, which is essential for the germline integrity. Repression of transposable elements is mediated via the piRNA metabolic process, which mediates the repression of transposable elements during meiosis by forming complexes composed of piRNAs and Piwi proteins and governs the repression of transposons. As a nuclear component, it is required for proper differentiation in the germline stem cell (GSC) lineage by repressing microRNA-7 (miR-7), thereby acting as an indirect regulator of bag-of-marbles (Bam). Acts by binding to the promoter of miR-7 gene and repressing its expression; miR-7 repression alleviates the Bam repression by miR-7, thereby allowing differentiation in the germline stem cell (GSC) lineage. This is Protein maelstrom 1 (mael1) from Drosophila pseudoobscura pseudoobscura (Fruit fly).